The following is a 419-amino-acid chain: Serine hydroxymethyltransferase 2 (419 aa).

(6S)-5,6,7,8-tetrahydrofolate is bound by residues leucine 120 and 124–126; that span reads GHL. An N6-(pyridoxal phosphate)lysine modification is found at lysine 229.

This sequence belongs to the SHMT family. Homodimer. Pyridoxal 5'-phosphate serves as cofactor.

It localises to the cytoplasm. It catalyses the reaction (6R)-5,10-methylene-5,6,7,8-tetrahydrofolate + glycine + H2O = (6S)-5,6,7,8-tetrahydrofolate + L-serine. Its pathway is one-carbon metabolism; tetrahydrofolate interconversion. It participates in amino-acid biosynthesis; glycine biosynthesis; glycine from L-serine: step 1/1. Functionally, catalyzes the reversible interconversion of serine and glycine with tetrahydrofolate (THF) serving as the one-carbon carrier. This reaction serves as the major source of one-carbon groups required for the biosynthesis of purines, thymidylate, methionine, and other important biomolecules. Also exhibits THF-independent aldolase activity toward beta-hydroxyamino acids, producing glycine and aldehydes, via a retro-aldol mechanism. The polypeptide is Serine hydroxymethyltransferase 2 (Salmonella typhi).